We begin with the raw amino-acid sequence, 383 residues long: Dimethylsulfoniopropionate lyase 3 (383 aa).

It belongs to the aspartate/glutamate racemases family. ALMA1 subfamily. As to quaternary structure, homotetramer.

The enzyme catalyses S,S-dimethyl-beta-propiothetin = acrylate + dimethyl sulfide + H(+). Mediates cleavage of dimethylsulfoniopropionate (DMSP) into dimethyl sulfide (DMS) and acrylate. DMS is the principal form by which sulfur is transported from oceans to the atmosphere and is a key component of the ocean sulfur cycle. The protein is Dimethylsulfoniopropionate lyase 3 of Emiliania huxleyi (strain CCMP1516).